Consider the following 61-residue polypeptide: Small ribosomal subunit protein uS14 (61 aa).

Zn(2+) contacts are provided by Cys-24, Cys-27, Cys-40, and Cys-43.

This sequence belongs to the universal ribosomal protein uS14 family. Zinc-binding uS14 subfamily. Part of the 30S ribosomal subunit. Contacts proteins S3 and S10. Zn(2+) is required as a cofactor.

Functionally, binds 16S rRNA, required for the assembly of 30S particles and may also be responsible for determining the conformation of the 16S rRNA at the A site. The polypeptide is Small ribosomal subunit protein uS14 (Halalkalibacterium halodurans (strain ATCC BAA-125 / DSM 18197 / FERM 7344 / JCM 9153 / C-125) (Bacillus halodurans)).